Here is a 71-residue protein sequence, read N- to C-terminus: Sec-independent protein translocase protein TatA (71 aa).

A helical transmembrane segment spans residues 1-21 (MGSFSIWHWLIVLVIVALIFG). The interval 48 to 71 (ADKTEQVTQQQTTIDVQAKEKQNS) is disordered.

Belongs to the TatA/E family. The Tat system comprises two distinct complexes: a TatABC complex, containing multiple copies of TatA, TatB and TatC subunits, and a separate TatA complex, containing only TatA subunits. Substrates initially bind to the TatABC complex, which probably triggers association of the separate TatA complex to form the active translocon.

The protein resides in the cell inner membrane. Functionally, part of the twin-arginine translocation (Tat) system that transports large folded proteins containing a characteristic twin-arginine motif in their signal peptide across membranes. TatA could form the protein-conducting channel of the Tat system. The sequence is that of Sec-independent protein translocase protein TatA from Bordetella avium (strain 197N).